The chain runs to 468 residues: tRNA (guanine(37)-N(1))-methyltransferase 1 (468 aa).

S-adenosyl-L-methionine-binding positions include His-207, 245-246 (DL), and 273-274 (DA). Residues 301–348 (KEAAVSRGGETNSSGEEIRESNASINEPLGANKKPSGTTKTENGVGKD) are disordered. The span at 309 to 325 (GETNSSGEEIRESNASI) shows a compositional bias: polar residues. Asn-380 lines the S-adenosyl-L-methionine pocket.

It belongs to the class I-like SAM-binding methyltransferase superfamily. TRM5/TYW2 family. As to quaternary structure, monomer.

It is found in the mitochondrion matrix. The protein resides in the nucleus. It localises to the cytoplasm. The enzyme catalyses guanosine(37) in tRNA + S-adenosyl-L-methionine = N(1)-methylguanosine(37) in tRNA + S-adenosyl-L-homocysteine + H(+). Functionally, specifically methylates the N1 position of guanosine-37 in various cytoplasmic and mitochondrial tRNAs. Methylation is not dependent on the nature of the nucleoside 5' of the target nucleoside. This is the first step in the biosynthesis of wybutosine (yW), a modified base adjacent to the anticodon of tRNAs and required for accurate decoding. The protein is tRNA (guanine(37)-N(1))-methyltransferase 1 of Arabidopsis thaliana (Mouse-ear cress).